The chain runs to 408 residues: Putative transporter AmpG 2 (408 aa).

Helical transmembrane passes span 11–31 (IFNI…YLLT), 49–69 (IGLF…GPLL), 84–104 (YCLV…TSFN), 110–130 (TPFV…DMLI), 154–174 (FRIG…IISW), 177–197 (VYRT…FYPL), 224–244 (WIVI…LSIM), 261–281 (IGYK…GGFL), 294–311 (VLIY…LYFL), 315–337 (IISL…SPFF), 353–373 (IALI…ISGY), and 382–402 (YFFI…LYLP).

This sequence belongs to the major facilitator superfamily.

The protein localises to the cell inner membrane. The chain is Putative transporter AmpG 2 (ampG2) from Rickettsia typhi (strain ATCC VR-144 / Wilmington).